Consider the following 64-residue polypeptide: Large ribosomal subunit protein eL37 (64 aa).

Residues 1–6 (GRCSAC) form a C4-type zinc finger. 2 residues coordinate Zn(2+): Cys-3 and Cys-6.

Belongs to the eukaryotic ribosomal protein eL37 family. Zn(2+) serves as cofactor.

Functionally, binds to the 23S rRNA. This Solanum lycopersicum (Tomato) protein is Large ribosomal subunit protein eL37 (RPL37).